Consider the following 187-residue polypeptide: Abscisic acid receptor PYL9 (187 aa).

Residues 27–178 (HLCRENQCTS…NLKSLADVSE (152 aa)) are START-like. Cystine bridges form between Cys29–Cys159 and Cys34–Cys159. Abscisate is bound by residues Lys63, 91-96 (ATTSTE), 118-124 (RLKNYSS), and Glu143. The Gate loop signature appears at 87 to 91 (SGLPA). A Latch loop motif is present at residues 117–119 (HRL).

It belongs to the PYR/PYL/RCAR abscisic acid intracellular receptor family. Homodimer. Monomer. Binds ABA on one subunit only. Binds to CARs protein in an ABA-independent manner, both at the plasma membrane and in the nucleus. Binds specifically (+)-ABA but not (-)-ABA. Interacts with HAB1, ABI1 and ABI2, and possibly with other PP2Cs. Interacts with TOPP1. Interacts with DDA1. As to expression, expressed in root tips, vascular tissues, stomata, flowers, pollen tubes and developing seeds.

It localises to the cytoplasm. Its subcellular location is the nucleus. The protein localises to the cell membrane. In terms of biological role, receptor for abscisic acid (ABA) required for ABA-mediated responses such as stomatal closure and germination inhibition. Inhibits the activity of group-A protein phosphatases type 2C (PP2Cs) in an ABA-independent manner but more efficiently when activated by ABA. Confers enhanced sensitivity to ABA. Can be activated only by (+)-ABA but not by (-)-ABA. The sequence is that of Abscisic acid receptor PYL9 (PYL9) from Arabidopsis thaliana (Mouse-ear cress).